Consider the following 113-residue polypeptide: Colicin-E1* immunity protein (113 aa).

This protein is able to protect a cell, which harbors the plasmid pKY-1 encoding colicin E1*, against colicin E1*. The protein is Colicin-E1* immunity protein (imm) of Shigella sonnei.